The sequence spans 211 residues: tRNA (guanine-N(7)-)-methyltransferase (211 aa).

Residues Glu-44, Asp-69, Asp-96, and Asp-118 each contribute to the S-adenosyl-L-methionine site. Asp-118 is a catalytic residue. Residue Lys-122 participates in substrate binding. The interval Arg-124–Arg-129 is interaction with RNA. Residues Asp-154 and Thr-191–Glu-194 each bind substrate.

The protein belongs to the class I-like SAM-binding methyltransferase superfamily. TrmB family.

The enzyme catalyses guanosine(46) in tRNA + S-adenosyl-L-methionine = N(7)-methylguanosine(46) in tRNA + S-adenosyl-L-homocysteine. Its pathway is tRNA modification; N(7)-methylguanine-tRNA biosynthesis. Catalyzes the formation of N(7)-methylguanine at position 46 (m7G46) in tRNA. The chain is tRNA (guanine-N(7)-)-methyltransferase from Streptococcus pneumoniae (strain JJA).